Here is a 214-residue protein sequence, read N- to C-terminus: tRNA (guanine-N(7)-)-methyltransferase (214 aa).

S-adenosyl-L-methionine contacts are provided by Glu-44, Glu-69, Asp-96, and Asp-118. Asp-118 is an active-site residue. Substrate contacts are provided by residues Lys-122, Asp-154, and 191–194 (TEYE).

The protein belongs to the class I-like SAM-binding methyltransferase superfamily. TrmB family.

It catalyses the reaction guanosine(46) in tRNA + S-adenosyl-L-methionine = N(7)-methylguanosine(46) in tRNA + S-adenosyl-L-homocysteine. It functions in the pathway tRNA modification; N(7)-methylguanine-tRNA biosynthesis. In terms of biological role, catalyzes the formation of N(7)-methylguanine at position 46 (m7G46) in tRNA. This is tRNA (guanine-N(7)-)-methyltransferase from Listeria innocua serovar 6a (strain ATCC BAA-680 / CLIP 11262).